A 277-amino-acid polypeptide reads, in one-letter code: Ras suppressor protein 1 (277 aa).

The disordered stretch occupies residues Met-1 to Asp-24. At Ser-2 the chain carries N-acetylserine. The span at Lys-7–Asp-24 shows a compositional bias: basic and acidic residues. LRR repeat units lie at residues His-41–Lys-63, Asn-64–Leu-85, Lys-87–Pro-109, Ala-110–Leu-133, Thr-135–Leu-156, Lys-158–Leu-179, and Gln-181–Leu-202. The segment at Met-250–Arg-277 is disordered. Residues Pro-256–Lys-265 are compositionally biased toward basic and acidic residues.

Potentially plays a role in the Ras signal transduction pathway. Capable of suppressing v-Ras transformation in vitro. This is Ras suppressor protein 1 (RSU1) from Homo sapiens (Human).